We begin with the raw amino-acid sequence, 685 residues long: UvrABC system protein B (685 aa).

Positions Glu39 to Val420 constitute a Helicase ATP-binding domain. Gly52–Thr59 provides a ligand contact to ATP. A Beta-hairpin motif is present at residues Tyr105–Ile128. The Helicase C-terminal domain occupies Gln443–Ile596. One can recognise a UVR domain in the interval Ala640–Arg675.

This sequence belongs to the UvrB family. Forms a heterotetramer with UvrA during the search for lesions. Interacts with UvrC in an incision complex.

It is found in the cytoplasm. The UvrABC repair system catalyzes the recognition and processing of DNA lesions. A damage recognition complex composed of 2 UvrA and 2 UvrB subunits scans DNA for abnormalities. Upon binding of the UvrA(2)B(2) complex to a putative damaged site, the DNA wraps around one UvrB monomer. DNA wrap is dependent on ATP binding by UvrB and probably causes local melting of the DNA helix, facilitating insertion of UvrB beta-hairpin between the DNA strands. Then UvrB probes one DNA strand for the presence of a lesion. If a lesion is found the UvrA subunits dissociate and the UvrB-DNA preincision complex is formed. This complex is subsequently bound by UvrC and the second UvrB is released. If no lesion is found, the DNA wraps around the other UvrB subunit that will check the other stand for damage. The sequence is that of UvrABC system protein B from Aromatoleum aromaticum (strain DSM 19018 / LMG 30748 / EbN1) (Azoarcus sp. (strain EbN1)).